Consider the following 185-residue polypeptide: Kunitz-type serine protease inhibitor DrTI (185 aa).

2 disulfide bridges follow: Cys-44–Cys-89 and Cys-139–Cys-147.

The protein belongs to the protease inhibitor I3 (leguminous Kunitz-type inhibitor) family.

It is found in the secreted. Its function is as follows. Inhibits bovine trypsin and human plasma kallikrein. The polypeptide is Kunitz-type serine protease inhibitor DrTI (Delonix regia (Royal poinciana)).